The sequence spans 285 residues: Diphthine methyl ester synthase (285 aa).

Residues Leu9, Asp84, Gly87, 112–113, and Leu163 contribute to the S-adenosyl-L-methionine site; that span reads SI. At Ser171 the chain carries Phosphoserine. S-adenosyl-L-methionine-binding residues include Val225 and His250.

This sequence belongs to the diphthine synthase family.

It catalyses the reaction 2-[(3S)-amino-3-carboxypropyl]-L-histidyl-[translation elongation factor 2] + 4 S-adenosyl-L-methionine = diphthine methyl ester-[translation elongation factor 2] + 4 S-adenosyl-L-homocysteine + 3 H(+). Its pathway is protein modification; peptidyl-diphthamide biosynthesis. Its function is as follows. S-adenosyl-L-methionine-dependent methyltransferase that catalyzes four methylations of the modified target histidine residue in translation elongation factor 2 (EF-2), to form an intermediate called diphthine methyl ester. The four successive methylation reactions represent the second step of diphthamide biosynthesis. The chain is Diphthine methyl ester synthase (DPH5) from Bos taurus (Bovine).